The primary structure comprises 93 residues: Putative regulatory protein LBL_1834 (93 aa).

Belongs to the RemA family.

In Leptospira borgpetersenii serovar Hardjo-bovis (strain L550), this protein is Putative regulatory protein LBL_1834.